Here is a 414-residue protein sequence, read N- to C-terminus: NFATC2-interacting protein (414 aa).

The tract at residues 1-42 (MAEPLRRRGPRSRGGRASRGARRARAARGRCPRAPRSPTRLI) is disordered. Residues 7–33 (RRGPRSRGGRASRGARRARAARGRCPR) show a composition bias toward basic residues. A phosphoserine mark is found at S52 and S54. The disordered stretch occupies residues 63 to 118 (ADPGEVPVARLPAPAAPEQDSDSDSEGAAEGPAGAPRTLVRRRRRLLDPGEAPVVP). Over residues 68–79 (VPVARLPAPAAP) the composition is skewed to low complexity. S83, S85, and S87 each carry phosphoserine. Low complexity predominate over residues 90-100 (AAEGPAGAPRT). The residue at position 121 (S121) is a Phosphoserine. Residue K123 forms a Glycyl lysine isopeptide (Lys-Gly) (interchain with G-Cter in SUMO2) linkage. Positions 139 to 208 (KLCPSEPEDE…SSRNKSRKHT (70 aa)) are disordered. Residues 170 to 229 (KKKLRKKHEKEEKKMEEFPDQDISPLPQPSSRNKSRKHTEALQKLREVNKRLQDLRSCLS) are a coiled coil. Residues S193, S199, and S309 each carry the phosphoserine modification. Phosphothreonine is present on residues T311 and T313. The region spanning 343–414 (LRLRVQGKEK…ESGDLIEVWG (72 aa)) is the Ubiquitin-like domain. Phosphoserine is present on residues S364 and S385.

In terms of assembly, interacts with NFATC2, TRAF1, TRAF2 and PRMT1. Interacts with UBE2I/UBC9. Post-translationally, methylation at the N-terminus by PRMT1 modulates interaction with the NFAT complex and results in augmented cytokine production.

It is found in the nucleus. The protein resides in the cytoplasm. In T-helper 2 (Th2) cells, regulates the magnitude of NFAT-driven transcription of a specific subset of cytokine genes, including IL3, IL4, IL5 and IL13, but not IL2. Recruits PRMT1 to the IL4 promoter; this leads to enhancement of histone H4 'Arg-3'-methylation and facilitates subsequent histone acetylation at the IL4 locus, thus promotes robust cytokine expression. Down-regulates formation of poly-SUMO chains by UBE2I/UBC9. The protein is NFATC2-interacting protein (Nfatc2ip) of Rattus norvegicus (Rat).